A 790-amino-acid chain; its full sequence is Probable quinate dehydrogenase (quinone) (790 aa).

The next 4 membrane-spanning stretches (helical) occupy residues 22 to 42 (GSWY…LIVL), 48 to 68 (ALVY…DAGL), 77 to 94 (LMLP…WPAL), and 106 to 126 (AYGV…GMFV). Residues 171–200 (RSNGRPAAGSPGPTTPGEIANSDGNGAEDQ) form a disordered region. The segment covering 174-187 (GRPAAGSPGPTTPG) has biased composition (low complexity).

The protein belongs to the bacterial PQQ dehydrogenase family. Requires pyrroloquinoline quinone as cofactor.

The protein resides in the cell membrane. It catalyses the reaction L-quinate + a quinone = 3-dehydroquinate + a quinol. It functions in the pathway aromatic compound metabolism; 3,4-dihydroxybenzoate biosynthesis; 3-dehydroquinate from D-quinate (PQQ route): step 1/1. The chain is Probable quinate dehydrogenase (quinone) (qumA) from Xanthomonas campestris pv. juglandis (Xanthomonas arboricola pv. juglandis).